The following is a 227-amino-acid chain: Transmembrane emp24 domain-containing protein 4 (227 aa).

The N-terminal stretch at 1 to 29 is a signal peptide; that stretch reads MAGVGVGPLQGMVRFGLLVLTVCAACARG. The Lumenal segment spans residues 30 to 194; the sequence is LYFHIGETEK…RLTSESTNQR (165 aa). The 99-residue stretch at 39–137 folds into the GOLD domain; it reads KRCFIEEIPD…KLRVHLDIQV (99 aa). Residue Asn-117 is glycosylated (N-linked (GlcNAc...) asparagine). Positions 147 to 176 form a coiled coil; that stretch reads IAAKDKLTELQLRARQLLDQVEQIQKEQDY. Residues 195–212 traverse the membrane as a helical segment; sequence VLWWSIAQTVILILTGIW. Residues 213-227 are Cytoplasmic-facing; that stretch reads QMRHLKSFFEAKKLV. The COPII vesicle coat-binding signature appears at 220-221; that stretch reads FF. Positions 220–227 match the COPI vesicle coat-binding motif; sequence FFEAKKLV.

The protein belongs to the EMP24/GP25L family.

The protein localises to the endoplasmic reticulum membrane. In terms of biological role, involved in vesicular protein trafficking, mainly in the early secretory pathway. Involved in the maintenance of the Golgi apparatus. Appears to play a role in the biosynthesis of secreted cargo including processing. Involved in endoplasmic reticulum stress response. May play a role in the regulation of heat-shock response and apoptosis. The chain is Transmembrane emp24 domain-containing protein 4 (Tmed4) from Mus musculus (Mouse).